A 669-amino-acid chain; its full sequence is Carnitine O-palmitoyltransferase 2, mitochondrial (669 aa).

The N-terminal 36 residues, 1 to 36, are a transit peptide targeting the mitochondrion; it reads MMAGLLSTQCNSTLSKLKHLSNNPALSVLTSTHRKY. The Mitochondrial matrix portion of the chain corresponds to 37–190; sequence SSKDGAGSEY…GLLEPEVFHL (154 aa). Positions 191 to 220 form an intramembrane region, note=Mitochondrial inner membrane; that stretch reads NPAKSDTDSFKKLIRWVPPSISWFGAYMVN. The Mitochondrial matrix portion of the chain corresponds to 221–669; the sequence is AYPLDMSQYF…FTVLDGNPIH (449 aa). Residue H384 is the Proton acceptor of the active site. CoA is bound at residue 464 to 476; that stretch reads GKEQLKKKKLSPD. Residues Y498, S500, and T511 each coordinate (R)-carnitine.

The protein belongs to the carnitine/choline acetyltransferase family.

It is found in the mitochondrion inner membrane. The enzyme catalyses (R)-carnitine + hexadecanoyl-CoA = O-hexadecanoyl-(R)-carnitine + CoA. It carries out the reaction octanoyl-CoA + (R)-carnitine = O-octanoyl-(R)-carnitine + CoA. The catalysed reaction is decanoyl-CoA + (R)-carnitine = O-decanoyl-(R)-carnitine + CoA. It catalyses the reaction dodecanoyl-CoA + (R)-carnitine = O-dodecanoyl-R-carnitine + CoA. The enzyme catalyses tetradecanoyl-CoA + (R)-carnitine = O-tetradecanoyl-(R)-carnitine + CoA. It carries out the reaction (R)-carnitine + octadecanoyl-CoA = O-octadecanoyl-(R)-carnitine + CoA. The catalysed reaction is eicosanoyl-CoA + (R)-carnitine = O-eicosanoyl-(R)-carnitine + CoA. It catalyses the reaction (9Z)-tetradecenoyl-CoA + (R)-carnitine = O-(9Z)-tetradecenoyl-(R)-carnitine + CoA. The enzyme catalyses (5Z)-tetradecenoyl-CoA + (R)-carnitine = O-(5Z)-tetradecenoyl-(R)-carnitine + CoA. It carries out the reaction (R)-carnitine + (9Z)-octadecenoyl-CoA = O-(9Z)-octadecenoyl-(R)-carnitine + CoA. The catalysed reaction is 4,8-dimethylnonanoyl-CoA + (R)-carnitine = O-4,8-dimethylnonanoyl-(R)-carnitine + CoA. The protein operates within lipid metabolism; fatty acid beta-oxidation. In terms of biological role, involved in the intramitochondrial synthesis of acylcarnitines from accumulated acyl-CoA metabolites. Reconverts acylcarnitines back into the respective acyl-CoA esters that can then undergo beta-oxidation, an essential step for the mitochondrial uptake of long-chain fatty acids and their subsequent beta-oxidation in the mitochondrion. Active with medium (C8-C12) and long-chain (C14-C18) acyl-CoA esters. The polypeptide is Carnitine O-palmitoyltransferase 2, mitochondrial (cpt2) (Danio rerio (Zebrafish)).